Consider the following 104-residue polypeptide: T-complex protein 1 subunit zeta (104 aa).

An ADP-binding site is contributed by Gly-24. Gly-24 contributes to the ATP binding site. Asp-75 is a binding site for Mg(2+). Gly-76, Thr-78, and Ser-79 together coordinate ADP. Gly-76 and Thr-78 together coordinate ATP.

This sequence belongs to the TCP-1 chaperonin family. In terms of assembly, component of the chaperonin-containing T-complex (TRiC), a hexadecamer composed of two identical back-to-back stacked rings enclosing a protein folding chamber. Each ring is made up of eight different subunits: TCP1/CCT1, CCT2, CCT3, CCT4, CCT5, CCT6A/CCT6, CCT7, CCT8. Interacts with PACRG.

The protein resides in the cytoplasm. The catalysed reaction is ATP + H2O = ADP + phosphate + H(+). Its function is as follows. Component of the chaperonin-containing T-complex (TRiC), a molecular chaperone complex that assists the folding of actin, tubulin and other proteins upon ATP hydrolysis. The TRiC complex mediates the folding of WRAP53/TCAB1, thereby regulating telomere maintenance. This Sus scrofa (Pig) protein is T-complex protein 1 subunit zeta (CCT6).